The chain runs to 342 residues: MNHSLKPWNTFGIDHNAQHIVCAEDEQQLLNAWQHATAEGQPVLILGEGSNVLFLEDYRGTVIINRIKGIEIHDEPDAWYLHVGAGENWHRLVKYTLQEGMPGLENLALIPGCVGSSPIQNIGAYGVELQRVCAYVDCVELATGKQVRLTAKECRFGYRDSIFKHEYQDRFAIVAVGLRLPKEWQPVLTYGDLTRLDPTTVTPQQVFDAVCHMRTTKLPDPKVNGNAGSFFKNPVVSAETAKALLSQFPTAPNYPQADGSVKLAAGWLIDQCQLKGMQMGGVAVHRQQALVLINEDNAKSEDVVQLAHHVRQKVGEKFNVWLEPEVRFIGASGEVSAVETIS.

Residues 13-183 (IDHNAQHIVC…VAVGLRLPKE (171 aa)) form the FAD-binding PCMH-type domain. The active site involves Arg159. Tyr190 contacts substrate. The active-site Proton donor is Ser229. Residue Glu325 is part of the active site.

This sequence belongs to the MurB family. As to quaternary structure, monomer. It depends on FAD as a cofactor.

Its subcellular location is the cytoplasm. It catalyses the reaction UDP-N-acetyl-alpha-D-muramate + NADP(+) = UDP-N-acetyl-3-O-(1-carboxyvinyl)-alpha-D-glucosamine + NADPH + H(+). It functions in the pathway cell wall biogenesis; peptidoglycan biosynthesis. Cell wall formation. This is UDP-N-acetylenolpyruvoylglucosamine reductase from Escherichia coli O157:H7.